The sequence spans 159 residues: uncharacterized protein (159 aa).

Transmembrane regions (helical) follow at residues 5–27 (TLDL…RGFV), 34–51 (ASIL…KRLV), 61–83 (SILL…MLFL), and 103–125 (FGFF…LLHV).

It is found in the cell membrane. This is an uncharacterized protein from Treponema pallidum (strain Nichols).